The sequence spans 147 residues: Hemoglobin subunit beta-1/2 (147 aa).

N-acetylvaline is present on Val-2. The Globin domain maps to 3 to 147; the sequence is HLSSEEKSAV…VANALAHKYH (145 aa). Thr-13 bears the Phosphothreonine mark. Ser-45 carries the post-translational modification Phosphoserine. An N6-acetyllysine modification is found at Lys-60. Residue His-64 coordinates heme b. Residue Lys-83 is modified to N6-acetyllysine. His-93 serves as a coordination point for heme b. S-nitrosocysteine is present on Cys-94. Lys-145 carries the N6-acetyllysine modification.

This sequence belongs to the globin family. Heterotetramer of two alpha chains and two beta chains. Red blood cells.

In terms of biological role, involved in oxygen transport from the lung to the various peripheral tissues. The chain is Hemoglobin subunit beta-1/2 (HBB1) from Oryctolagus cuniculus (Rabbit).